A 141-amino-acid polypeptide reads, in one-letter code: MAMLGLLLLASWALLGALGLQAEARPAPYGVKLCGREFIRAVIFTCGGSRWRRADILAHESLGDFFADGEANTDHLASELDEAVGSSEWLALTKSPQAFYGGRASWQGSPGVVRGSRDVLAGLSSSCCEWGCSKSQISSLC.

The N-terminal stretch at 1–24 (MAMLGLLLLASWALLGALGLQAEA) is a signal peptide. Intrachain disulfides connect C34–C128, C46–C141, and C127–C132. The propeptide at 54-117 (ADILAHESLG…GSPGVVRGSR (64 aa)) is connecting peptide.

The protein belongs to the insulin family. Heterodimer of a B chain and an A chain linked by two disulfide bonds. High expression in the brain localized to the pons/medulla with highest levels in pars ventromedialis of the dorsal tegmental nucleus. Significant expression is also detected in the spleen, thymus, lung, testis and ovary.

It is found in the secreted. Its function is as follows. May play a role in neuropeptide signaling processes. Ligand for LGR7, relaxin-3 receptor-1 and relaxin-3 receptor-2. The sequence is that of Relaxin-3 (Rln3) from Mus musculus (Mouse).